Reading from the N-terminus, the 354-residue chain is GTPase Obg (354 aa).

The Obg domain occupies 1–159 (MKFVDEVKIH…RDLVLELKLL (159 aa)). The OBG-type G domain occupies 160-333 (ADVGIVGYPN…LLDAVGRALF (174 aa)). GTP-binding positions include 166-173 (GYPNAGKS), 191-195 (FTTLT), 212-215 (DIPG), 283-286 (TKID), and 314-316 (SAV). Mg(2+) contacts are provided by Ser173 and Thr193.

Belongs to the TRAFAC class OBG-HflX-like GTPase superfamily. OBG GTPase family. In terms of assembly, monomer. Mg(2+) is required as a cofactor.

The protein localises to the cytoplasm. Functionally, an essential GTPase which binds GTP, GDP and possibly (p)ppGpp with moderate affinity, with high nucleotide exchange rates and a fairly low GTP hydrolysis rate. Plays a role in control of the cell cycle, stress response, ribosome biogenesis and in those bacteria that undergo differentiation, in morphogenesis control. This is GTPase Obg from Anaeromyxobacter sp. (strain K).